The following is a 251-amino-acid chain: Phosphomannomutase (251 aa).

The active-site Nucleophile is aspartate 18. Aspartate 18 and aspartate 20 together coordinate Mg(2+). Aspartate 20 serves as the catalytic Proton donor/acceptor. Residues arginine 27, arginine 129, arginine 140, arginine 147, serine 185, and aspartate 187 each coordinate alpha-D-mannose 1-phosphate. Mg(2+) is bound by residues aspartate 213, phenylalanine 225, aspartate 227, and threonine 230.

This sequence belongs to the eukaryotic PMM family. As to quaternary structure, homodimer. Mg(2+) serves as cofactor.

It is found in the cytoplasm. It carries out the reaction alpha-D-mannose 1-phosphate = D-mannose 6-phosphate. Its pathway is nucleotide-sugar biosynthesis; GDP-alpha-D-mannose biosynthesis; alpha-D-mannose 1-phosphate from D-fructose 6-phosphate: step 2/2. Functionally, catalyzes the interconversion of mannose-6-phosphate to mannose-1-phosphate, the precursor for the synthesis of GDP-mannose. GDP-mannose is an essential sugar nucleotide for the synthesis of D-mannose-containing cell wall polysaccharides (galactomannans and glucomannans), glycolipids, glycoproteins and the antioxidant L-ascorbate. This Galdieria sulphuraria (Red alga) protein is Phosphomannomutase.